The primary structure comprises 21 residues: uncharacterized protein (21 aa).

This is an uncharacterized protein from Haemophilus influenzae (strain ATCC 51907 / DSM 11121 / KW20 / Rd).